Consider the following 186-residue polypeptide: Elongation factor P (186 aa).

Belongs to the elongation factor P family.

It is found in the cytoplasm. Its pathway is protein biosynthesis; polypeptide chain elongation. Functionally, involved in peptide bond synthesis. Stimulates efficient translation and peptide-bond synthesis on native or reconstituted 70S ribosomes in vitro. Probably functions indirectly by altering the affinity of the ribosome for aminoacyl-tRNA, thus increasing their reactivity as acceptors for peptidyl transferase. The polypeptide is Elongation factor P (Brucella abortus (strain S19)).